The primary structure comprises 137 residues: ATP synthase epsilon chain (137 aa).

Belongs to the ATPase epsilon chain family. As to quaternary structure, F-type ATPases have 2 components, CF(1) - the catalytic core - and CF(0) - the membrane proton channel. CF(1) has five subunits: alpha(3), beta(3), gamma(1), delta(1), epsilon(1). CF(0) has three main subunits: a, b and c.

Its subcellular location is the cellular thylakoid membrane. Functionally, produces ATP from ADP in the presence of a proton gradient across the membrane. This is ATP synthase epsilon chain (atpC) from Synechococcus elongatus (strain ATCC 33912 / PCC 7942 / FACHB-805) (Anacystis nidulans R2).